The primary structure comprises 281 residues: RNA polymerase sigma factor RpoH (281 aa).

Residues 52–121 (LILSHLRFVI…IHEYVLRNWR (70 aa)) form a sigma-70 factor domain-2 region. The Interaction with polymerase core subunit RpoC signature appears at 76–79 (DLIQ). Positions 226–277 (ALQSLDARSQDIIKARWLDDNKATLHDLAAKYNVSAERIRQLETNALKKLKS) are sigma-70 factor domain-4. Residues 250 to 269 (LHDLAAKYNVSAERIRQLET) constitute a DNA-binding region (H-T-H motif).

The protein belongs to the sigma-70 factor family. RpoH subfamily. In terms of assembly, interacts with the RNA polymerase core enzyme.

The protein localises to the cytoplasm. Functionally, sigma factors are initiation factors that promote the attachment of RNA polymerase to specific initiation sites and are then released. This sigma factor is involved in regulation of expression of heat shock genes. This is RNA polymerase sigma factor RpoH from Haemophilus influenzae (strain ATCC 51907 / DSM 11121 / KW20 / Rd).